The primary structure comprises 269 residues: Phosphate import ATP-binding protein PstB (269 aa).

One can recognise an ABC transporter domain in the interval 14 to 253 (LTLEDVSISY…EFDSTKKIFS (240 aa)). 46 to 53 (GPSGCGKS) lines the ATP pocket.

The protein belongs to the ABC transporter superfamily. Phosphate importer (TC 3.A.1.7) family. In terms of assembly, the complex is composed of two ATP-binding proteins (PstB), two transmembrane proteins (PstC and PstA) and a solute-binding protein (PstS).

The protein resides in the cell inner membrane. It carries out the reaction phosphate(out) + ATP + H2O = ADP + 2 phosphate(in) + H(+). In terms of biological role, part of the ABC transporter complex PstSACB involved in phosphate import. Responsible for energy coupling to the transport system. In Prochlorococcus marinus subsp. pastoris (strain CCMP1986 / NIES-2087 / MED4), this protein is Phosphate import ATP-binding protein PstB.